We begin with the raw amino-acid sequence, 212 residues long: Fe/S biogenesis protein NfuA (212 aa).

The [4Fe-4S] cluster site is built by Cys-169 and Cys-172.

Belongs to the NfuA family. In terms of assembly, homodimer. [4Fe-4S] cluster serves as cofactor.

Involved in iron-sulfur cluster biogenesis. Binds a 4Fe-4S cluster, can transfer this cluster to apoproteins, and thereby intervenes in the maturation of Fe/S proteins. Could also act as a scaffold/chaperone for damaged Fe/S proteins. This chain is Fe/S biogenesis protein NfuA, found in Acinetobacter baumannii (strain AB307-0294).